Here is a 120-residue protein sequence, read N- to C-terminus: UPF0344 protein lin2366 (120 aa).

4 consecutive transmembrane segments (helical) span residues 3-23 (GYVH…ALLI), 33-53 (MLQM…IMMV), 62-82 (ILAI…EMLL), and 92-112 (GMFL…GFYL).

Belongs to the UPF0344 family.

Its subcellular location is the cell membrane. In Listeria innocua serovar 6a (strain ATCC BAA-680 / CLIP 11262), this protein is UPF0344 protein lin2366.